We begin with the raw amino-acid sequence, 85 residues long: Small ribosomal subunit protein uS17 (85 aa).

The protein belongs to the universal ribosomal protein uS17 family. Part of the 30S ribosomal subunit.

One of the primary rRNA binding proteins, it binds specifically to the 5'-end of 16S ribosomal RNA. The chain is Small ribosomal subunit protein uS17 from Desulfosudis oleivorans (strain DSM 6200 / JCM 39069 / Hxd3) (Desulfococcus oleovorans).